The following is a 500-amino-acid chain: Metal transporter Nramp3.1 (500 aa).

The next 12 membrane-spanning stretches (helical) occupy residues 51-71 (LWLF…PGNL), 79-99 (AIAG…GLLV), 128-148 (MILW…EVIG), 160-180 (VLPL…FLFL), 188-208 (LEAA…WMFA), 234-254 (AVGV…SALV), 280-300 (AALA…AKGF), 322-342 (YGGG…AAGQ), 370-390 (ALIT…VFDT), 401-421 (WLNM…LCLV), 439-459 (VSWL…LDFF), and 467-487 (VFTT…IYLI).

It belongs to the NRAMP (TC 2.A.55) family. In terms of tissue distribution, expressed in roots, stems, buds and leaves.

It localises to the golgi apparatus. The protein resides in the trans-Golgi network membrane. The enzyme catalyses Mn(2+)(in) = Mn(2+)(out). It catalyses the reaction Fe(2+)(in) = Fe(2+)(out). Its function is as follows. Divalent metal transporter. Can transport manganese (Mn) and iron (Fe). Involved in the control of cell-to-cell transport of manganese (Mn) between organs and tissues to monitor Mn homeostasis. The protein is Metal transporter Nramp3.1 of Populus trichocarpa (Western balsam poplar).